The chain runs to 282 residues: Acyl-CoA-binding domain-containing protein 6 (282 aa).

The disordered stretch occupies residues 1-31 (MASSFLPAGAITGDSGGELSSGDDSGEVEFP). The ACB domain maps to 42 to 127 (LAELFEKAAA…VKKLDPGWNP (86 aa)). An acyl-CoA contacts are provided by residues 69 to 73 (YARYK) and Lys-95. Position 106 is a phosphoserine (Ser-106). Residue Tyr-114 coordinates an acyl-CoA. 2 ANK repeats span residues 191 to 220 (EGRA…DINC) and 224 to 253 (EGQT…DPTL).

As to quaternary structure, monomer. As to expression, detected in placenta and spleen (at protein level). Detected in placenta, umbilical cord blood, CD34-positive hematopoietic progenitor cells and bone marrow.

It is found in the cytoplasm. The protein resides in the nucleus. Its function is as follows. Binds long-chain acyl-coenzyme A molecules with a strong preference for unsaturated C18:1-CoA, lower affinity for unsaturated C20:4-CoA, and very weak affinity for saturated C16:0-CoA. Does not bind fatty acids. Plays a role in protein N-myristoylation. The sequence is that of Acyl-CoA-binding domain-containing protein 6 (ACBD6) from Homo sapiens (Human).